The sequence spans 29 residues: Brevinin-2Td (29 aa).

Cysteines 23 and 29 form a disulfide.

This sequence belongs to the frog skin active peptide (FSAP) family. Brevinin subfamily. As to expression, expressed by the skin glands.

The protein localises to the secreted. Functionally, antibacterial activity against representative Gram-negative and Gram-positive bacteria. This is Brevinin-2Td from Rana temporaria (European common frog).